Consider the following 70-residue polypeptide: Large ribosomal subunit protein bL31 (70 aa).

Zn(2+) is bound by residues Cys-16, Cys-18, Cys-37, and Cys-40.

Belongs to the bacterial ribosomal protein bL31 family. Type A subfamily. As to quaternary structure, part of the 50S ribosomal subunit. It depends on Zn(2+) as a cofactor.

Binds the 23S rRNA. The chain is Large ribosomal subunit protein bL31 from Shewanella sp. (strain MR-4).